A 478-amino-acid polypeptide reads, in one-letter code: Cytochrome c-552 (478 aa).

An N-terminal signal peptide occupies residues 1-26 (MARKTLRARRFFSLIFPFFFMTSVYA). Histidine 94 contributes to the heme c binding site. 3 residues coordinate heme: cysteine 122, cysteine 125, and lysine 126. Residues cysteine 160, cysteine 163, histidine 164, cysteine 209, cysteine 212, and histidine 213 each contribute to the heme c site. Glutamate 215, tyrosine 216, lysine 261, and glutamine 263 together coordinate Ca(2+). Residue tyrosine 216 participates in substrate binding. Substrate is bound at residue histidine 264. Heme c is bound by residues histidine 275, cysteine 282, cysteine 285, histidine 286, histidine 301, cysteine 314, cysteine 317, histidine 318, and histidine 393.

The protein belongs to the cytochrome c-552 family. Ca(2+) is required as a cofactor. It depends on heme c as a cofactor.

The protein resides in the periplasm. The enzyme catalyses 6 Fe(III)-[cytochrome c] + NH4(+) + 2 H2O = 6 Fe(II)-[cytochrome c] + nitrite + 8 H(+). It functions in the pathway nitrogen metabolism; nitrate reduction (assimilation). Catalyzes the reduction of nitrite to ammonia, consuming six electrons in the process. This Salmonella arizonae (strain ATCC BAA-731 / CDC346-86 / RSK2980) protein is Cytochrome c-552.